Reading from the N-terminus, the 508-residue chain is Nucleolar complex protein 4 homolog (508 aa).

The next 3 membrane-spanning stretches (helical) occupy residues 288-308, 341-361, and 367-387; these read VAYG…FILI, HLAD…AAFI, and LALT…CNLF.

This sequence belongs to the CBF/MAK21 family.

The protein localises to the nucleus membrane. It localises to the nucleus. It is found in the nucleolus. This chain is Nucleolar complex protein 4 homolog (NOC4L), found in Gallus gallus (Chicken).